The chain runs to 926 residues: Alanine--tRNA ligase (926 aa).

Positions 615, 619, 719, and 723 each coordinate Zn(2+). Residues 887–910 (RVGGGGGGPPDFAQGGGPDADALD) are disordered. The segment covering 888–904 (VGGGGGGPPDFAQGGGP) has biased composition (gly residues).

This sequence belongs to the class-II aminoacyl-tRNA synthetase family. Zn(2+) is required as a cofactor.

Its subcellular location is the cytoplasm. The catalysed reaction is tRNA(Ala) + L-alanine + ATP = L-alanyl-tRNA(Ala) + AMP + diphosphate. Catalyzes the attachment of alanine to tRNA(Ala) in a two-step reaction: alanine is first activated by ATP to form Ala-AMP and then transferred to the acceptor end of tRNA(Ala). Also edits incorrectly charged Ser-tRNA(Ala) and Gly-tRNA(Ala) via its editing domain. This is Alanine--tRNA ligase from Halorubrum lacusprofundi (strain ATCC 49239 / DSM 5036 / JCM 8891 / ACAM 34).